A 378-amino-acid chain; its full sequence is Ribosomal RNA large subunit methyltransferase G (378 aa).

Belongs to the methyltransferase superfamily. RlmG family.

It is found in the cytoplasm. The enzyme catalyses guanosine(1835) in 23S rRNA + S-adenosyl-L-methionine = N(2)-methylguanosine(1835) in 23S rRNA + S-adenosyl-L-homocysteine + H(+). Specifically methylates the guanine in position 1835 (m2G1835) of 23S rRNA. This Shigella boydii serotype 4 (strain Sb227) protein is Ribosomal RNA large subunit methyltransferase G.